Consider the following 311-residue polypeptide: MNRTRSASMAQGGLNWDSLPLKLFAGGNAKFWNPADIDFSRDRADWERLTDDERSYATRLCAEFIAGEESVTQDIQPFMAAMRAEGRLGDEMYLTQFAFEEAKHVQVFRMWLDAVGVTDDLHHFLDDVPSYRTIFYEELPDCLNALTIDPSPAAQVRASVTYNHMVEGMLALTGYFGWHKICVERGILPGMQELVRRIGDDERRHMAWGTFTCRRHVAADDANWGVFETRMNELMPLGLRLIEEGFALYDPMPFDLSVDEFMAYASDKGMRRFGTIASARGRPLAEIDLDYTPVQLEDTFADEDARALAAV.

Mn(2+)-binding residues include Glu68, Glu101, and His104. Residues 71-162 (VTQDIQPFMA…AAQVRASVTY (92 aa)) constitute a cross-link (3-(O4'-tyrosyl)-valine (Val-Tyr)). Glu101 lines the Fe cation pocket. The Fe cation site is built by Glu167, Glu202, and His205.

This sequence belongs to the ribonucleoside diphosphate reductase small chain family. R2-like ligand binding oxidase subfamily. Homodimer. Fe cation is required as a cofactor. It depends on Mn(2+) as a cofactor.

Functionally, probable oxidase that might be involved in lipid metabolism. In Mycolicibacterium paratuberculosis (strain ATCC BAA-968 / K-10) (Mycobacterium paratuberculosis), this protein is R2-like ligand binding oxidase.